The primary structure comprises 124 residues: Small ribosomal subunit protein uS12 (124 aa).

3-methylthioaspartic acid is present on aspartate 89.

This sequence belongs to the universal ribosomal protein uS12 family. In terms of assembly, part of the 30S ribosomal subunit. Contacts proteins S8 and S17. May interact with IF1 in the 30S initiation complex.

Its function is as follows. With S4 and S5 plays an important role in translational accuracy. Functionally, interacts with and stabilizes bases of the 16S rRNA that are involved in tRNA selection in the A site and with the mRNA backbone. Located at the interface of the 30S and 50S subunits, it traverses the body of the 30S subunit contacting proteins on the other side and probably holding the rRNA structure together. The combined cluster of proteins S8, S12 and S17 appears to hold together the shoulder and platform of the 30S subunit. The sequence is that of Small ribosomal subunit protein uS12 from Shewanella amazonensis (strain ATCC BAA-1098 / SB2B).